The primary structure comprises 241 residues: Beta-nerve growth factor (241 aa).

The first 18 residues, 1 to 18 (MSMLFYTLITALLIGIQA), serve as a signal peptide directing secretion. The propeptide occupies 19-121 (APHTESNVPA…SFNRTHRSKR (103 aa)). 3 cysteine pairs are disulfide-bonded: Cys136–Cys201, Cys179–Cys229, and Cys189–Cys231. The N-linked (GlcNAc...) asparagine glycan is linked to Asn166. Positions 173 and 209 each coordinate a 1-acyl-sn-glycero-3-phospho-(1D-myo-inositol). Lys209 provides a ligand contact to a 1-acyl-sn-glycero-3-phospho-L-serine.

This sequence belongs to the NGF-beta family. In terms of assembly, homodimer. The homodimer interacts with a single NTRK1 chain. The homodimer interacts with a single NGFR chain. The NGF dimer interacts with a single SORCS2 chain (via extracellular domain). The NGF precursor (proNGF) binds to a receptor complex formed by SORT1 and NGFR, which leads to NGF endocytosis. Both mature NGF and the immature NGF precursor (proNGF) interact with SORCS2 and with the heterodimer formed by SORCS2 and NGFR (via extracellular domains). The NGF precursor (proNGF) has much higher affinity for SORCS2 than mature NGF. The NGF precursor (proNGF) has much higher affinity for SORT1 than mature NGF. Interacts with ADAM10 in a divalent cation-dependent manner. Interacts with SORCS3.

It is found in the secreted. It localises to the endosome lumen. Its function is as follows. Nerve growth factor is important for the development and maintenance of the sympathetic and sensory nervous systems. Extracellular ligand for the NTRK1 and NGFR receptors, activates cellular signaling cascades to regulate neuronal proliferation, differentiation and survival. The immature NGF precursor (proNGF) functions as a ligand for the heterodimeric receptor formed by SORCS2 and NGFR, and activates cellular signaling cascades that lead to inactivation of RAC1 and/or RAC2, reorganization of the actin cytoskeleton and neuronal growth cone collapse. In contrast to mature NGF, the precursor form (proNGF) promotes neuronal apoptosis (in vitro). Inhibits metalloproteinase-dependent proteolysis of platelet glycoprotein VI. Binds lysophosphatidylinositol and lysophosphatidylserine between the two chains of the homodimer. The lipid-bound form promotes histamine relase from mast cells, contrary to the lipid-free form. The chain is Beta-nerve growth factor (NGF) from Bos taurus (Bovine).